A 349-amino-acid chain; its full sequence is 5-deoxyribose 1-phosphate isomerase (349 aa).

Substrate is bound by residues 49 to 51, arginine 92, and glutamine 199; that span reads RGA. Catalysis depends on aspartate 240, which acts as the Proton donor. 250 to 251 serves as a coordination point for substrate; it reads NK.

Belongs to the EIF-2B alpha/beta/delta subunits family. DrdI subfamily.

The enzyme catalyses 5-deoxy-alpha-D-ribose 1-phosphate = 5-deoxy-D-ribulose 1-phosphate. It participates in carbohydrate degradation. Catalyzes the isomerization of 5-deoxy-alpha-D-ribose 1-phosphate to 5-deoxy-D-ribulose 1-phosphate, as part of a 5-deoxyribose salvage pathway that recycles this toxic radical SAM enzyme by-product to mainstream metabolites. This chain is 5-deoxyribose 1-phosphate isomerase, found in Clostridium botulinum (strain Kyoto / Type A2).